Consider the following 203-residue polypeptide: Large ribosomal subunit protein uL18 (203 aa).

The protein belongs to the universal ribosomal protein uL18 family. Part of the 50S ribosomal subunit. Contacts the 5S and 23S rRNAs.

Its function is as follows. This is one of the proteins that bind and probably mediate the attachment of the 5S RNA into the large ribosomal subunit, where it forms part of the central protuberance. This Pyrococcus furiosus (strain ATCC 43587 / DSM 3638 / JCM 8422 / Vc1) protein is Large ribosomal subunit protein uL18.